The chain runs to 153 residues: Transcriptional repressor NrdR (153 aa).

A zinc finger lies at 3–34 (CPFCGYEDSKVVDTRPTNEGKTIKRRRECLKC). The region spanning 49 to 139 (ILVIKKDNRR…VYRQFKDINT (91 aa)) is the ATP-cone domain.

It belongs to the NrdR family. Requires Zn(2+) as cofactor.

Functionally, negatively regulates transcription of bacterial ribonucleotide reductase nrd genes and operons by binding to NrdR-boxes. This Caldicellulosiruptor bescii (strain ATCC BAA-1888 / DSM 6725 / KCTC 15123 / Z-1320) (Anaerocellum thermophilum) protein is Transcriptional repressor NrdR.